A 254-amino-acid chain; its full sequence is MDVKNKMVAESMSFYYDDYQALKNISIAFPENQVTALIGPSGCGKSTFLRCLNRMNDLVPKTRMSGRIMLGDLNIYNPKIDVVDLRKKIGMVFQKPNPFPKSIYDNIAYAPRIHGLVRTRQETDALVEDSLHKAGLWNEVKDRLNDLGTALSGGQQQRLCIARAIAMQPDVLLMDEPASALDPIATQKIEDLVLELKKRFTIIIVTHNMQQASRASDYTAFFYLGELIEFGKTDQIFTKPREKQTEDYITGRFG.

The ABC transporter domain maps to 7-249 (MVAESMSFYY…PREKQTEDYI (243 aa)). Residue 39–46 (GPSGCGKS) coordinates ATP.

This sequence belongs to the ABC transporter superfamily. Phosphate importer (TC 3.A.1.7) family. In terms of assembly, the complex is composed of two ATP-binding proteins (PstB), two transmembrane proteins (PstC and PstA) and a solute-binding protein (PstS).

The protein localises to the cell inner membrane. The enzyme catalyses phosphate(out) + ATP + H2O = ADP + 2 phosphate(in) + H(+). Functionally, part of the ABC transporter complex PstSACB involved in phosphate import. Responsible for energy coupling to the transport system. This chain is Phosphate import ATP-binding protein PstB, found in Chlorobium chlorochromatii (strain CaD3).